Here is a 1230-residue protein sequence, read N- to C-terminus: DNA-directed RNA polymerase, mitochondrial (1230 aa).

The N-terminal 41 residues, 1–41 (MSALCWGRGAAGLKRALRPCGRPGLPGKEGTAGGVCGPRRS), are a transit peptide targeting the mitochondrion. Disordered stretches follow at residues 18–55 (RPCG…DRRK), 95–115 (GSGD…KDAT), and 731–750 (VPAP…PHSA). Pro residues predominate over residues 732 to 744 (PAPPSEAPQPPEA). The segment at 802 to 1230 (FRGRTYPCPP…QVKRSTYFFS (429 aa)) is mediates interaction with TEFM. Residues Asp922, Lys991, and Asp1151 contribute to the active site.

The protein belongs to the phage and mitochondrial RNA polymerase family. In terms of assembly, homodimer. Component of the mitochondrial transcription initiation complex, composed at least of TFB2M, TFAM and POLRMT. In this complex TFAM recruits POLRMT to the promoter whereas TFB2M induces structural changes in POLRMT to enable promoter opening and trapping of the DNA non-template strand. Upon metabolic stress, forms a complex composed of FOXO3, SIRT3 and mitochondrial RNA polymerase POLRMT; the complex is recruited to mtDNA in a SIRT3-dependent manner. Also forms a complex composed of FOXO3, SIRT3, TFAM and POLRMT. Interacts with TFB1M and TFB2M, leading to the stimulation of transcription. Interacts with TEFM. Interacts with MTRES1.

It localises to the mitochondrion. It carries out the reaction RNA(n) + a ribonucleoside 5'-triphosphate = RNA(n+1) + diphosphate. Its function is as follows. DNA-dependent RNA polymerase catalyzes the transcription of mitochondrial DNA into RNA using the four ribonucleoside triphosphates as substrates. Component of the mitochondrial transcription initiation complex, composed at least of TFB2M, TFAM and POLRMT that is required for basal transcription of mitochondrial DNA. In this complex, TFAM recruits POLRMT to a specific promoter whereas TFB2M induces structural changes in POLRMT to enable promoter opening and trapping of the DNA non-template strand. Has DNA primase activity. Catalyzes the synthesis of short RNA primers that are necessary for the initiation of lagging-strand DNA synthesis from the origin of light-strand DNA replication (OriL). The protein is DNA-directed RNA polymerase, mitochondrial of Homo sapiens (Human).